The sequence spans 705 residues: Fatty acid oxidation complex subunit alpha (705 aa).

The tract at residues 1-190 is enoyl-CoA hydratase; the sequence is MSEQKAFNLK…KLGVVDACVP (190 aa). The segment at 308–705 is 3-hydroxyacyl-CoA dehydrogenase; sequence SKVGMVGVLG…AGEGRRFYDN (398 aa).

In the N-terminal section; belongs to the enoyl-CoA hydratase/isomerase family. The protein in the central section; belongs to the 3-hydroxyacyl-CoA dehydrogenase family. Heterotetramer of two alpha chains (FadJ) and two beta chains (FadI).

It localises to the cytoplasm. The enzyme catalyses a (3S)-3-hydroxyacyl-CoA = a (2E)-enoyl-CoA + H2O. It catalyses the reaction a 4-saturated-(3S)-3-hydroxyacyl-CoA = a (3E)-enoyl-CoA + H2O. The catalysed reaction is a (3S)-3-hydroxyacyl-CoA + NAD(+) = a 3-oxoacyl-CoA + NADH + H(+). It carries out the reaction (3S)-3-hydroxybutanoyl-CoA = (3R)-3-hydroxybutanoyl-CoA. It functions in the pathway lipid metabolism; fatty acid beta-oxidation. Catalyzes the formation of a hydroxyacyl-CoA by addition of water on enoyl-CoA. Also exhibits 3-hydroxyacyl-CoA epimerase and 3-hydroxyacyl-CoA dehydrogenase activities. The chain is Fatty acid oxidation complex subunit alpha from Vibrio vulnificus (strain CMCP6).